A 524-amino-acid polypeptide reads, in one-letter code: Ribonuclease Y (524 aa).

A helical transmembrane segment spans residues 3-23 (IVINLLLLVLAALVAFVAGFF). Residues 214-280 (ALSVVHIQSD…KLTLKKLLAD (67 aa)) enclose the KH domain. In terms of domain architecture, HD spans 340–432 (LLQHSREVAM…VDAANTISLS (93 aa)).

This sequence belongs to the RNase Y family.

The protein localises to the cell membrane. Its function is as follows. Endoribonuclease that initiates mRNA decay. The polypeptide is Ribonuclease Y (Chlorobium chlorochromatii (strain CaD3)).